Here is a 215-residue protein sequence, read N- to C-terminus: Pyrrolidone-carboxylate peptidase (215 aa).

Active-site residues include E80, C143, and H167.

It belongs to the peptidase C15 family. As to quaternary structure, homotetramer.

It is found in the cytoplasm. The enzyme catalyses Release of an N-terminal pyroglutamyl group from a polypeptide, the second amino acid generally not being Pro.. In terms of biological role, removes 5-oxoproline from various penultimate amino acid residues except L-proline. The polypeptide is Pyrrolidone-carboxylate peptidase (Bacillus cereus (strain ATCC 14579 / DSM 31 / CCUG 7414 / JCM 2152 / NBRC 15305 / NCIMB 9373 / NCTC 2599 / NRRL B-3711)).